The primary structure comprises 229 residues: Large ribosomal subunit protein uL1 (229 aa).

This sequence belongs to the universal ribosomal protein uL1 family. Part of the 50S ribosomal subunit.

In terms of biological role, binds directly to 23S rRNA. The L1 stalk is quite mobile in the ribosome, and is involved in E site tRNA release. Protein L1 is also a translational repressor protein, it controls the translation of the L11 operon by binding to its mRNA. The polypeptide is Large ribosomal subunit protein uL1 (Actinobacillus pleuropneumoniae serotype 3 (strain JL03)).